We begin with the raw amino-acid sequence, 1048 residues long: FHIP family protein GJ17503 (1048 aa).

Polar residues predominate over residues 1–15; the sequence is MSWLRTSPLRQSLTR. The segment at 1–32 is disordered; the sequence is MSWLRTSPLRQSLTRNSGSSGSGNSSATTTLR. Positions 16–26 are enriched in low complexity; sequence NSGSSGSGNSS. Position 500 is a phosphoserine (Ser500). 3 disordered regions span residues 652–675, 813–871, and 924–984; these read TTTATSDTDLEHNNSSSIGSGRRD, APMH…KRRS, and ARGA…ESGL. The segment covering 816–838 has biased composition (low complexity); it reads HQQHQQQQLQHTTNPTQQQQAQQ. Composition is skewed to polar residues over residues 839-857 and 929-954; these read RSTYATLSAATPVQASPTS and QEQSRGNTCETSLSTAPRQEAQTAVV. The segment covering 955 to 978 has biased composition (low complexity); the sequence is SSSNSSIGGSTQTLSATHSSSTLH.

This sequence belongs to the FHIP family.

The chain is FHIP family protein GJ17503 from Drosophila virilis (Fruit fly).